The sequence spans 157 residues: SsrA-binding protein (157 aa).

Basic and acidic residues predominate over residues 138 to 151 (ATEAKRDWGREKQR). The disordered stretch occupies residues 138–157 (ATEAKRDWGREKQRLLKQHS).

It belongs to the SmpB family.

The protein localises to the cytoplasm. Its function is as follows. Required for rescue of stalled ribosomes mediated by trans-translation. Binds to transfer-messenger RNA (tmRNA), required for stable association of tmRNA with ribosomes. tmRNA and SmpB together mimic tRNA shape, replacing the anticodon stem-loop with SmpB. tmRNA is encoded by the ssrA gene; the 2 termini fold to resemble tRNA(Ala) and it encodes a 'tag peptide', a short internal open reading frame. During trans-translation Ala-aminoacylated tmRNA acts like a tRNA, entering the A-site of stalled ribosomes, displacing the stalled mRNA. The ribosome then switches to translate the ORF on the tmRNA; the nascent peptide is terminated with the 'tag peptide' encoded by the tmRNA and targeted for degradation. The ribosome is freed to recommence translation, which seems to be the essential function of trans-translation. This is SsrA-binding protein from Cereibacter sphaeroides (strain ATCC 17025 / ATH 2.4.3) (Rhodobacter sphaeroides).